Reading from the N-terminus, the 148-residue chain is Azurin (148 aa).

The first 18 residues, 1–18 (MRNQLLFALAFIPTIAAA), serve as a signal peptide directing secretion. The region spanning 19–148 (ASNCEVNVSA…MMRGTVKLVD (130 aa)) is the Plastocyanin-like domain. Cysteines 22 and 45 form a disulfide. 4 residues coordinate Cu cation: His-65, Cys-131, His-136, and Met-140.

The protein resides in the periplasm. It participates in one-carbon metabolism; methylamine degradation. Probable electron acceptor for methylamine dehydrogenase. This Methylobacillus flagellatus (strain ATCC 51484 / DSM 6875 / VKM B-1610 / KT) protein is Azurin (azu).